The sequence spans 845 residues: G-type lectin S-receptor-like serine/threonine-protein kinase At1g11410 (845 aa).

The N-terminal stretch at 1 to 21 (MKFFFIFFIFLFSFLIQSCYS) is a signal peptide. The Bulb-type lectin domain maps to 22-147 (DNTILRSQSL…VTGKSFWESF (126 aa)). Residues 22 to 441 (DNTILRSQSL…NGNGASGKKR (420 aa)) are Extracellular-facing. Asn-82, Asn-103, Asn-185, Asn-231, and Asn-259 each carry an N-linked (GlcNAc...) asparagine glycan. An EGF-like domain is found at 283–321 (PEDKCDIYNHCGFNGYCDSTSTEKFECSCLPGYEPKTPR). 2 disulfide bridges follow: Cys-287-Cys-299 and Cys-293-Cys-309. One can recognise a PAN domain in the interval 341–424 (CNGKEGFAKL…SGQDFYLRVD (84 aa)). N-linked (GlcNAc...) asparagine glycosylation is found at Asn-357, Asn-366, and Asn-379. 2 disulfides stabilise this stretch: Cys-372/Cys-399 and Cys-376/Cys-382. The chain crosses the membrane as a helical span at residues 442 to 462 (LVLILISLIAVVMLLLISFHC). Topologically, residues 463–845 (YLRKRRQRTQ…DVTLTDVQGR (383 aa)) are cytoplasmic. Positions 523-808 (FAFQNKLGAG…DLPSPKHPAF (286 aa)) constitute a Protein kinase domain. Residues 529–537 (LGAGGFGPV) and Lys-551 contribute to the ATP site. The tract at residues 612–629 (EQRAELDWPKRMGIIRGI) is caM-binding. The active-site Proton acceptor is the Asp-648. The interval 803–845 (PKHPAFTAGRRRNTKTGGSSDNWPSGETSSTINDVTLTDVQGR) is disordered. The segment covering 817 to 845 (KTGGSSDNWPSGETSSTINDVTLTDVQGR) has biased composition (polar residues).

The protein belongs to the protein kinase superfamily. Ser/Thr protein kinase family.

The protein resides in the cell membrane. It carries out the reaction L-seryl-[protein] + ATP = O-phospho-L-seryl-[protein] + ADP + H(+). It catalyses the reaction L-threonyl-[protein] + ATP = O-phospho-L-threonyl-[protein] + ADP + H(+). The chain is G-type lectin S-receptor-like serine/threonine-protein kinase At1g11410 from Arabidopsis thaliana (Mouse-ear cress).